Here is a 320-residue protein sequence, read N- to C-terminus: Ferrochelatase (320 aa).

Residues His-194 and Glu-275 each coordinate Fe cation.

The protein belongs to the ferrochelatase family.

The protein localises to the cytoplasm. The catalysed reaction is heme b + 2 H(+) = protoporphyrin IX + Fe(2+). Its pathway is porphyrin-containing compound metabolism; protoheme biosynthesis; protoheme from protoporphyrin-IX: step 1/1. In terms of biological role, catalyzes the ferrous insertion into protoporphyrin IX. The chain is Ferrochelatase from Vibrio atlanticus (strain LGP32) (Vibrio splendidus (strain Mel32)).